A 131-amino-acid polypeptide reads, in one-letter code: QRFP-like peptide (131 aa).

A signal peptide spans 1 to 25 (MGVRVMRSRICVIGLLVLMLTQSEA). A propeptide spanning residues 26–94 (YSFREKSWRT…DDGISPADKR (69 aa)) is cleaved from the precursor. The tract at residues 48 to 131 (RRDGGDQAPS…RESRRSFGSD (84 aa)) is disordered. The segment covering 97–106 (MLQQLAQQLK) has biased composition (polar residues). Residue Phe-119 is modified to Phenylalanine amide. Residues 120–131 (GKRESRRSFGSD) are compositionally biased toward basic and acidic residues. Positions 123–131 (ESRRSFGSD) are excised as a propeptide.

Belongs to the RFamide neuropeptide family.

Its subcellular location is the secreted. Functionally, ligand for the G-protein coupled receptor QRFPR. The protein is QRFP-like peptide of Branchiostoma floridae (Florida lancelet).